The chain runs to 264 residues: 3-methyl-2-oxobutanoate hydroxymethyltransferase 1 (264 aa).

Mg(2+) is bound by residues Asp45 and Asp84. 3-methyl-2-oxobutanoate contacts are provided by residues 45-46 (DS), Asp84, and Lys112. Glu114 lines the Mg(2+) pocket. Glu181 serves as the catalytic Proton acceptor.

The protein belongs to the PanB family. Homodecamer; pentamer of dimers. Mg(2+) is required as a cofactor.

It is found in the cytoplasm. It carries out the reaction 3-methyl-2-oxobutanoate + (6R)-5,10-methylene-5,6,7,8-tetrahydrofolate + H2O = 2-dehydropantoate + (6S)-5,6,7,8-tetrahydrofolate. The protein operates within cofactor biosynthesis; (R)-pantothenate biosynthesis; (R)-pantoate from 3-methyl-2-oxobutanoate: step 1/2. Functionally, catalyzes the reversible reaction in which hydroxymethyl group from 5,10-methylenetetrahydrofolate is transferred onto alpha-ketoisovalerate to form ketopantoate. The sequence is that of 3-methyl-2-oxobutanoate hydroxymethyltransferase 1 from Aliivibrio fischeri (strain ATCC 700601 / ES114) (Vibrio fischeri).